Consider the following 652-residue polypeptide: Acetyl-coenzyme A synthetase (652 aa).

CoA contacts are provided by residues 191 to 194 and Thr-311; that span reads RAGN. Residues 387-389, 411-416, Asp-503, and Arg-518 each bind ATP; these read GEP and DTWWQT. Ser-526 contacts CoA. Arg-529 provides a ligand contact to ATP. Mg(2+) is bound by residues Val-540, His-542, and Val-545. Arg-587 provides a ligand contact to CoA. Lys-613 carries the N6-acetyllysine modification.

It belongs to the ATP-dependent AMP-binding enzyme family. The cofactor is Mg(2+). Post-translationally, acetylated. Deacetylation by the SIR2-homolog deacetylase activates the enzyme.

It carries out the reaction acetate + ATP + CoA = acetyl-CoA + AMP + diphosphate. Catalyzes the conversion of acetate into acetyl-CoA (AcCoA), an essential intermediate at the junction of anabolic and catabolic pathways. AcsA undergoes a two-step reaction. In the first half reaction, AcsA combines acetate with ATP to form acetyl-adenylate (AcAMP) intermediate. In the second half reaction, it can then transfer the acetyl group from AcAMP to the sulfhydryl group of CoA, forming the product AcCoA. In Marinomonas sp. (strain MWYL1), this protein is Acetyl-coenzyme A synthetase.